Consider the following 393-residue polypeptide: uncharacterized protein (393 aa).

At 1-17 (MVSKDQTSFNKRWTLGL) the chain is on the cytoplasmic side. Residues 18 to 38 (LMLGLVIILWVLSSFLINLIF) form a helical membrane-spanning segment. Topologically, residues 39–46 (EDDSYRKP) are vacuolar. The chain crosses the membrane as a helical span at residues 47–67 (FFITYTNTAAFIFYLFPTAKA). The Cytoplasmic portion of the chain corresponds to 68–132 (VVVNYKDTGR…LYETIKLSAE (65 aa)). A Phosphoserine modification is found at serine 93. A helical transmembrane segment spans residues 133 to 153 (FCILWFTANLVTNASLAFTSV). At 154-156 (ASQ) the chain is on the vacuolar side. Residues 157–176 (TILSTTSSFFTLFIGAICHV) traverse the membrane as a helical segment. Over 177-182 (ESLSKS) the chain is Cytoplasmic. Residues 183–200 (KVLGSFISFVGIIMVTKS) traverse the membrane as a helical segment. Residues 201 to 219 (DSHQRYQRHIADVSGDDND) lie on the Vacuolar side of the membrane. Residues 220-240 (AVQVLIGNLLALAGAVLYGVY) form a helical membrane-spanning segment. Over 241 to 257 (STLLKREVGDETRVNMK) the chain is Cytoplasmic. Residues 258–278 (IFFGFVGLFNLLFLWPSLIVL) form a helical membrane-spanning segment. Over 279 to 292 (DFFGWEPFSLPKDP) the chain is Vacuolar. The helical transmembrane segment at 293-313 (KVVVIIFVNCLITFVSDFCWA) threads the bilayer. Residues 314–321 (KAMLLTSP) are Cytoplasmic-facing. The helical transmembrane segment at 322-342 (LTVTVGLSITIPLAMFGDVIF) threads the bilayer. The Vacuolar segment spans residues 343–345 (KHK). Residues 346–366 (TMSALYLFGATLILGSFFIIN) traverse the membrane as a helical segment. Topologically, residues 367–393 (KSSEEEHFENSITASNYESVEVPAANN) are cytoplasmic.

The protein belongs to the TPT transporter family.

Its subcellular location is the vacuole membrane. This is an uncharacterized protein from Saccharomyces cerevisiae (strain ATCC 204508 / S288c) (Baker's yeast).